A 443-amino-acid chain; its full sequence is ATP-dependent protease ATPase subunit HslU (443 aa).

Residues Val18, 60-65, Asp256, Glu321, and Arg393 contribute to the ATP site; that span reads GVGKTE.

This sequence belongs to the ClpX chaperone family. HslU subfamily. As to quaternary structure, a double ring-shaped homohexamer of HslV is capped on each side by a ring-shaped HslU homohexamer. The assembly of the HslU/HslV complex is dependent on binding of ATP.

Its subcellular location is the cytoplasm. In terms of biological role, ATPase subunit of a proteasome-like degradation complex; this subunit has chaperone activity. The binding of ATP and its subsequent hydrolysis by HslU are essential for unfolding of protein substrates subsequently hydrolyzed by HslV. HslU recognizes the N-terminal part of its protein substrates and unfolds these before they are guided to HslV for hydrolysis. This Azoarcus sp. (strain BH72) protein is ATP-dependent protease ATPase subunit HslU.